The sequence spans 1063 residues: JmjC domain-containing histone demethylation protein 1 (1063 aa).

The 181-residue stretch at 86-266 (LYNVLSLEYS…TQLRVYQVEN (181 aa)) folds into the JmjC domain. Threonine 160 contributes to the substrate binding site. Residues histidine 163 and aspartate 165 each contribute to the Fe cation site. Lysine 180 provides a ligand contact to substrate. Histidine 234 is a Fe cation binding site. The span at 379 to 389 (GLEEEAEDEDV) shows a compositional bias: acidic residues. Disordered stretches follow at residues 379 to 400 (GLEE…AEER), 554 to 750 (ESDE…NPYN), and 776 to 1040 (VELH…KRAK). A compositionally biased stretch (basic and acidic residues) spans 390–400 (KPETKKEAEER). Composition is skewed to acidic residues over residues 594 to 605 (PEYDEDMEEYDP) and 613 to 631 (ELEE…EEEY). Over residues 636 to 646 (TRRSSTRGSAS) the composition is skewed to low complexity. 5 stretches are compositionally biased toward basic and acidic residues: residues 647-665 (TKEE…PKKE), 674-712 (EKSS…ELRA), 776-806 (VELH…HEDS), 813-835 (PYDR…DSHR), and 892-902 (EPRRSNDRRTS). The segment covering 926–937 (AEAASASSSRHS) has biased composition (low complexity). 2 stretches are compositionally biased toward polar residues: residues 950-963 (LNSS…TPMY) and 973-982 (WLPNTSNVTR). Residues 1005–1016 (PPFPRSITPPPV) are compositionally biased toward pro residues. Residues 1020–1030 (ELKSQSNGRKS) are compositionally biased toward polar residues. A compositionally biased stretch (basic and acidic residues) spans 1031–1040 (NYSEDGKRAK).

It belongs to the JHDM1 histone demethylase family. It depends on Fe(2+) as a cofactor.

The protein localises to the nucleus. The catalysed reaction is N(6),N(6)-dimethyl-L-lysyl(36)-[histone H3] + 2 2-oxoglutarate + 2 O2 = L-lysyl(36)-[histone H3] + 2 formaldehyde + 2 succinate + 2 CO2. In terms of biological role, histone demethylase that specifically demethylates 'Lys-36' of histone H3, thereby playing a central role in histone code. This Caenorhabditis briggsae protein is JmjC domain-containing histone demethylation protein 1 (jhdm-1).